A 195-amino-acid chain; its full sequence is Interferon tau-11 (195 aa).

The N-terminal stretch at 1 to 23 is a signal peptide; it reads MAFVLSLLMALVLVSYGPGGSLG. Intrachain disulfides connect Cys24/Cys122 and Cys52/Cys162. The N-linked (GlcNAc...) asparagine glycan is linked to Asn101.

The protein belongs to the alpha/beta interferon family. IFN-alphaII subfamily. In terms of tissue distribution, constitutively and exclusively expressed in the mononuclear cells of the extraembryonic trophectoderm.

It localises to the secreted. Paracrine hormone primarily responsible for maternal recognition of pregnancy. Interacts with endometrial receptors, probably type I interferon receptors, and blocks estrogen receptor expression, preventing the estrogen-induced increase in oxytocin receptor expression in the endometrium. This results in the suppression of the pulsatile endometrial release of the luteolytic hormone prostaglandin F2-alpha, hindering the regression of the corpus luteum (luteolysis) and therefore a return to ovarian cyclicity. This, and a possible direct effect of IFN-tau on prostaglandin synthesis, leads in turn to continued ovarian progesterone secretion, which stimulates the secretion by the endometrium of the nutrients required for the growth of the conceptus. In summary, displays particularly high antiviral and antiproliferative potency concurrently with particular weak cytotoxicity, high antiluteolytic activity and immunomodulatory properties. In contrast with other IFNs, IFN-tau is not virally inducible. The protein is Interferon tau-11 (IFNT11) of Ovis aries (Sheep).